The following is a 1234-amino-acid chain: MVRPVQAGSRTRMSFAKIDEVLEIPDLIEVQKKSYQWFLEEGLKEVFQEISPIESFTGNLALEFVDYRLENNPKYSVEECKDRDTTYAAPLKVKVRLTNRETGEIKESEVFMGDLPLMTDKGTFIINGAERVIVSQLVRSPGVYYDQQFDKFGKKLIFATVIPNRGAWLEYEEDSNDVIYVRIDRTRKVPITVLLRAIGYNTDIQILDLLGEEEKLKATLDKDTTKSEEEALIEIYKRLRPGEPPTVESARSLFNALFFDPKRYDLAKVGRYKFNKKLALKARIANHKSAKRIVNPITGEVLVEEGEKITREKAEEIQNCGINEVEILVDGKVVKVVGNNTVDINKYPMPYDVSSLNIKELVNVRVLREILDNFSDEEAVLNEIKNRMDELVPKHITKDDIVATISYQLNLTHGVGFVDDIDHLGNRRVRSVGELLQNQFRIGLARLERVVKERMTIQDVNEVTPQNLINIRPVVAAIREFFGSSQLSQFMDQTNPLSELTHKRRVSALGPGGLSRERAGFEVRDVHYSHYGRICPIETPEGPNIGLITSLTTYARVNEYGFIETPYRKVDKATGTVTDEIVYMTADEEDEYIIAQANEPLDENNRFINDRVVCRLREEIISVPPTEVDFMDVSPKQIVSVSASLIPFLENDDANRALMGSNMQRQAVPLLKPEAPIVGTGMEYKAAVDSGAVILAKNDGIVEKVTADKVVIRTKDGKRDEYHLLKFKRSNQGTCINQRPIVNEGDEVKKGQVICDGPSTDHGELALGKNVLVGFMPWEGYNYEDAILISEELVMDDSLTSIHIEEYDAEARDTKLGPEEITREIPNVGEDALKDLDERGIIRIGAEVRAGDILVGKVTPKGETELTAEERLLRAIFGEKAREVRDTSLRVPHGESGIVVDVKVYSRENGDELPPGVNQMVRVFVAQKRKISVGDKMAGRHGNKGVISRILPVEDMPFLPDGTPLQICLNPLGVPSRMNIGQVLETHLGLVAKALGWYIASPVFDGATEKDIEELLAKSGFSPDGKVQLYDGRTGEPFDNKVTVGYMYMLKLHHLVDDKMHARSTGPYSLVTQQPLGGKAQFGGQRFGEMEVWALEAYGAAHTLQEMLTVKSDDVTGRVKAYEAIVKGENIPEPGIPESFKVLVKELQSLALDVKVITEDGQEIPIKEFEDDDDDVPDATLNINIEGREDAPPEEVYEEEYEEEPEELPEDIDFEPDNFDIDSEDLFMDDDYDG.

The tract at residues 1187 to 1234 is disordered; sequence GREDAPPEEVYEEEYEEEPEELPEDIDFEPDNFDIDSEDLFMDDDYDG. Residues 1192–1234 show a composition bias toward acidic residues; sequence PPEEVYEEEYEEEPEELPEDIDFEPDNFDIDSEDLFMDDDYDG.

The protein belongs to the RNA polymerase beta chain family. The RNAP catalytic core consists of 2 alpha, 1 beta, 1 beta' and 1 omega subunit. When a sigma factor is associated with the core the holoenzyme is formed, which can initiate transcription.

The enzyme catalyses RNA(n) + a ribonucleoside 5'-triphosphate = RNA(n+1) + diphosphate. Functionally, DNA-dependent RNA polymerase catalyzes the transcription of DNA into RNA using the four ribonucleoside triphosphates as substrates. This chain is DNA-directed RNA polymerase subunit beta, found in Caldanaerobacter subterraneus subsp. tengcongensis (strain DSM 15242 / JCM 11007 / NBRC 100824 / MB4) (Thermoanaerobacter tengcongensis).